A 261-amino-acid polypeptide reads, in one-letter code: Cytochrome c oxidase subunit 3 (261 aa).

At Met-1 to Pro-15 the chain is on the mitochondrial matrix side. A helical membrane pass occupies residues Trp-16–Trp-34. Residues Phe-35–Thr-40 lie on the Mitochondrial intermembrane side of the membrane. Residues Thr-41 to Thr-66 form a helical membrane-spanning segment. The Mitochondrial matrix segment spans residues Phe-67–Thr-72. Residues Pro-73–Ser-105 traverse the membrane as a helical segment. The Mitochondrial intermembrane portion of the chain corresponds to Leu-106–Glu-128. A helical membrane pass occupies residues Val-129–Thr-152. The Mitochondrial matrix portion of the chain corresponds to Glu-153–Asn-155. Residues Arg-156 to Glu-183 traverse the membrane as a helical segment. Topologically, residues Ala-184 to Asp-190 are mitochondrial intermembrane. The chain crosses the membrane as a helical span at residues Ser-191–Ile-223. Topologically, residues Lys-224–His-232 are mitochondrial matrix. A helical membrane pass occupies residues Phe-233 to Met-256. Over Tyr-257–Ser-261 the chain is Mitochondrial intermembrane.

This sequence belongs to the cytochrome c oxidase subunit 3 family. As to quaternary structure, component of the cytochrome c oxidase (complex IV, CIV), a multisubunit enzyme composed of 14 subunits. The complex is composed of a catalytic core of 3 subunits MT-CO1, MT-CO2 and MT-CO3, encoded in the mitochondrial DNA, and 11 supernumerary subunits COX4I, COX5A, COX5B, COX6A, COX6B, COX6C, COX7A, COX7B, COX7C, COX8 and NDUFA4, which are encoded in the nuclear genome. The complex exists as a monomer or a dimer and forms supercomplexes (SCs) in the inner mitochondrial membrane with NADH-ubiquinone oxidoreductase (complex I, CI) and ubiquinol-cytochrome c oxidoreductase (cytochrome b-c1 complex, complex III, CIII), resulting in different assemblies (supercomplex SCI(1)III(2)IV(1) and megacomplex MCI(2)III(2)IV(2)).

Its subcellular location is the mitochondrion inner membrane. It catalyses the reaction 4 Fe(II)-[cytochrome c] + O2 + 8 H(+)(in) = 4 Fe(III)-[cytochrome c] + 2 H2O + 4 H(+)(out). Component of the cytochrome c oxidase, the last enzyme in the mitochondrial electron transport chain which drives oxidative phosphorylation. The respiratory chain contains 3 multisubunit complexes succinate dehydrogenase (complex II, CII), ubiquinol-cytochrome c oxidoreductase (cytochrome b-c1 complex, complex III, CIII) and cytochrome c oxidase (complex IV, CIV), that cooperate to transfer electrons derived from NADH and succinate to molecular oxygen, creating an electrochemical gradient over the inner membrane that drives transmembrane transport and the ATP synthase. Cytochrome c oxidase is the component of the respiratory chain that catalyzes the reduction of oxygen to water. Electrons originating from reduced cytochrome c in the intermembrane space (IMS) are transferred via the dinuclear copper A center (CU(A)) of subunit 2 and heme A of subunit 1 to the active site in subunit 1, a binuclear center (BNC) formed by heme A3 and copper B (CU(B)). The BNC reduces molecular oxygen to 2 water molecules using 4 electrons from cytochrome c in the IMS and 4 protons from the mitochondrial matrix. The protein is Cytochrome c oxidase subunit 3 (MT-CO3) of Gallus gallus (Chicken).